The following is a 342-amino-acid chain: GTPase Obg (342 aa).

The Obg domain maps to 1–159 (MKFLDLCKVY…RTIWLRLKLI (159 aa)). Positions 160–327 (ADAGLLGLPN…VLRALWAEID (168 aa)) constitute an OBG-type G domain. GTP contacts are provided by residues 166 to 173 (GLPNAGKS), 191 to 195 (FTTLV), 212 to 215 (DIPG), 279 to 282 (NKID), and 308 to 310 (SGV). Residues S173 and T193 each coordinate Mg(2+).

This sequence belongs to the TRAFAC class OBG-HflX-like GTPase superfamily. OBG GTPase family. Monomer. Mg(2+) is required as a cofactor.

The protein localises to the cytoplasm. An essential GTPase which binds GTP, GDP and possibly (p)ppGpp with moderate affinity, with high nucleotide exchange rates and a fairly low GTP hydrolysis rate. Plays a role in control of the cell cycle, stress response, ribosome biogenesis and in those bacteria that undergo differentiation, in morphogenesis control. In Cereibacter sphaeroides (strain ATCC 17029 / ATH 2.4.9) (Rhodobacter sphaeroides), this protein is GTPase Obg.